Reading from the N-terminus, the 281-residue chain is 3-deoxy-manno-octulosonate cytidylyltransferase (281 aa).

It belongs to the KdsB family.

Its subcellular location is the cytoplasm. The enzyme catalyses 3-deoxy-alpha-D-manno-oct-2-ulosonate + CTP = CMP-3-deoxy-beta-D-manno-octulosonate + diphosphate. Its pathway is nucleotide-sugar biosynthesis; CMP-3-deoxy-D-manno-octulosonate biosynthesis; CMP-3-deoxy-D-manno-octulosonate from 3-deoxy-D-manno-octulosonate and CTP: step 1/1. It functions in the pathway bacterial outer membrane biogenesis; lipopolysaccharide biosynthesis. Its function is as follows. Activates KDO (a required 8-carbon sugar) for incorporation into bacterial lipopolysaccharide in Gram-negative bacteria. The sequence is that of 3-deoxy-manno-octulosonate cytidylyltransferase from Xanthomonas campestris pv. campestris (strain B100).